We begin with the raw amino-acid sequence, 99 residues long: Prostate and testis expressed protein 4 (99 aa).

The N-terminal stretch at methionine 1 to glycine 23 is a signal peptide. The UPAR/Ly6 domain occupies leucine 24–phenylalanine 99. Disulfide bonds link cysteine 26/cysteine 52, cysteine 29/cysteine 37, cysteine 44/cysteine 70, and cysteine 74/cysteine 90.

As to expression, expressed in prostate, testis, eye, kidney and skeletal muscle. Expressed in the dorsal lobe of prostate. Not expressed in the ventral lobe of prostate.

Its subcellular location is the secreted. Enhances sperm motility. Binds to calmodulin and inhibits calcium transport into spermatozoa. May modulate the function of nicotinic acetylcholine receptors. The protein is Prostate and testis expressed protein 4 (Pate4) of Mus musculus (Mouse).